The primary structure comprises 316 residues: Peroxisomal targeting signal 2 receptor (316 aa).

WD repeat units lie at residues 56 to 96, 102 to 142, 145 to 185, 188 to 228, 232 to 272, and 277 to 316; these read DTRD…GGRP, EHTK…SLKT, EHRY…SLNT, AHDH…RPTT, GHTY…DPII, and HHTE…GQFR.

This sequence belongs to the WD repeat peroxin-7 family. In terms of assembly, interacts with PEX5; interaction only takes place when PEX7 is associated with cargo proteins.

Its subcellular location is the cytoplasm. The protein resides in the cytosol. It localises to the peroxisome matrix. Functionally, receptor required for the peroxisomal import of proteins containing a C-terminal PTS2-type peroxisomal targeting signal. Specifically binds to cargo proteins containing a PTS2 peroxisomal targeting signal in the cytosol. Cargo protein-binding triggers interaction with PEX5 and formation of a ternary complex composed of PEX5 and PEX7 along with PTS2-containing cargo proteins, which is tranlocated into peroxisomes by passing through the PEX13-PEX14 docking complex. The protein is Peroxisomal targeting signal 2 receptor (pex7) of Dictyostelium discoideum (Social amoeba).